The chain runs to 619 residues: MSLDIAKYPTLALAENPEELRMLPKESLPKLCDELRQYLLTCVSRSSGHFASGLGVVELTVALHYVYNTPFDHLIWDVGHQAYPHKILTGRRDRISTIRQKDGLHPFPWRGESEYDVLSVGHSSTSISAGLGMAVAAEREGKGRRTVCVIGDGAITAGMAFEAMSHAGDIHSDMLVILNDNEMSISENVGGLNNHLAQLLSGKLYASLREGGKKAFSALPPIKDLLKRTEEHLKGMVVPSTLFEELGFNYIGPVDGHDVHTLTQTLKNMRDLKGPQLLHIMTKKGKGYAPAEKDPIGWHAVPKFDPASGTLPKSQSSLPTYSKIFGEWLCETAAKDSKLMAVTPAMREGSGMVRFSREYPQQYFDVAIAEQHAVTFAAGLAIGGYKPVVAIYSTFLQRAYDQLIHDVAIQNLPVLFAIDRGGLVGADGQTHQGAFDLSFMRCIPNMVIMAPSDENECRQMLYTGYHHNGPAAVRYPRGNGTSAVLEPLEMLPIGKGVLRREGEKIAILCFGTLLAQAQLAAENLNATLVDMRFVKPLDEELVLEMAAKHQVLVTVEENAIMGGAGSGVNELLMAKRRWVPVLNIGLPDLFVPQGEQDEMRSELGLDAAGIQRQIEAWLA.

Thiamine diphosphate is bound by residues His80 and 121-123; that span reads GHS. Asp152 lines the Mg(2+) pocket. Thiamine diphosphate-binding positions include 153–154, Asn181, Tyr288, and Glu370; that span reads GA. A Mg(2+)-binding site is contributed by Asn181.

Belongs to the transketolase family. DXPS subfamily. In terms of assembly, homodimer. Mg(2+) is required as a cofactor. It depends on thiamine diphosphate as a cofactor.

It catalyses the reaction D-glyceraldehyde 3-phosphate + pyruvate + H(+) = 1-deoxy-D-xylulose 5-phosphate + CO2. Its pathway is metabolic intermediate biosynthesis; 1-deoxy-D-xylulose 5-phosphate biosynthesis; 1-deoxy-D-xylulose 5-phosphate from D-glyceraldehyde 3-phosphate and pyruvate: step 1/1. Catalyzes the acyloin condensation reaction between C atoms 2 and 3 of pyruvate and glyceraldehyde 3-phosphate to yield 1-deoxy-D-xylulose-5-phosphate (DXP). The protein is 1-deoxy-D-xylulose-5-phosphate synthase of Yersinia pseudotuberculosis serotype O:3 (strain YPIII).